A 691-amino-acid chain; its full sequence is F-box/LRR-repeat protein 5 (691 aa).

The hemerythrin-like stretch occupies residues 1-159 (MAPFPEEVDV…IKKKVIAQHC (159 aa)). The Fe(3+) site is built by histidine 15, histidine 57, glutamate 58, glutamate 61, histidine 80, histidine 126, and glutamate 130. The F-box domain maps to 202-248 (STGITHLPPEVMLSIFSYLNPQELCRCSQVSMKWSQLTKTGSLWKHL). LRR repeat units follow at residues 340–364 (SSAVSSKMVRQILELCPNLEHLDLT), 365–392 (QTDISDSAFDSWSWLGCCQSLRHLDLSG), 393–418 (CEKITDVALEKISRALGILTSHQSGF), 479–508 (LWMLDAEDLADIEDTVEWRHRNVESLCVVE), 576–607 (TRLPRGKDLIYFGSEKSDQETGRVLLFLSLSG), 608–635 (CYQITDHGLRVLTLGGGLPYLEHLNLSG), and 636–661 (CLTITGAGLQDLVSACPSLNDEYFYY). [2Fe-2S] cluster is bound by residues cysteine 662, cysteine 676, cysteine 686, and cysteine 687.

Part of a SCF (SKP1-cullin-F-box) protein ligase complex. Interacts with ACO1/IRP1, IREB2/IRP2; the interaction depends on the [2Fe-2S] cluster. Interacts with DCTN1/p150-glued. It depends on [2Fe-2S] cluster as a cofactor. In terms of processing, polybiquitinated upon iron and oxygen depletion, leading to its degradation by the proteasome. Ubiquitination is regulated by the hemerythrin-like region that acts as an oxygen and iron sensor. Undergoes constitutive ubiquitin-dependent degradation at the steady state by HERC2.

It localises to the cytoplasm. It is found in the perinuclear region. The protein localises to the nucleus. Its pathway is protein modification; protein ubiquitination. An iron-sulfur cluster promotes IRP2 polyubiquitination and degradation in response to both iron and oxygen concentrations. Functionally, component of some SCF (SKP1-cullin-F-box) protein ligase complex that plays a central role in iron homeostasis by promoting the ubiquitination and subsequent degradation of IREB2/IRP2. The C-terminal domain of FBXL5 contains a redox-sensitive [2Fe-2S] cluster that, upon oxidation, promotes binding to IRP2 to effect its oxygen-dependent degradation. Under iron deficiency conditions, the N-terminal hemerythrin-like (Hr) region, which contains a diiron metal center, cannot bind iron and undergoes conformational changes that destabilize the FBXL5 protein and cause its ubiquitination and degradation. When intracellular iron levels start rising, the Hr region is stabilized. Additional increases in iron levels facilitate the assembly and incorporation of a redox active [2Fe-2S] cluster in the C-terminal domain. Only when oxygen level is high enough to maintain the cluster in its oxidized state can FBXL5 recruit IRP2 as a substrate for polyubiquination and degradation. Promotes ubiquitination and subsequent degradation of the dynactin complex component DCTN1. Within the nucleus, promotes the ubiquitination of SNAI1; preventing its interaction with DNA and promoting its degradation. Negatively regulates DNA damage response by mediating the ubiquitin-proteasome degradation of the DNA repair protein NABP2. This is F-box/LRR-repeat protein 5 (FBXL5) from Pongo abelii (Sumatran orangutan).